The primary structure comprises 291 residues: ADP-dependent (S)-NAD(P)H-hydrate dehydratase (291 aa).

In terms of domain architecture, YjeF C-terminal spans 5–273 (SKDILEEVIT…QALPTYMKKY (269 aa)). (6S)-NADPHX-binding residues include A40, G103, and H153. An AMP-binding site is contributed by G215. Residue D216 participates in (6S)-NADPHX binding.

This sequence belongs to the NnrD/CARKD family. In terms of assembly, homotetramer. Mg(2+) serves as cofactor.

The catalysed reaction is (6S)-NADHX + ADP = AMP + phosphate + NADH + H(+). It carries out the reaction (6S)-NADPHX + ADP = AMP + phosphate + NADPH + H(+). Functionally, catalyzes the dehydration of the S-form of NAD(P)HX at the expense of ADP, which is converted to AMP. Together with NAD(P)HX epimerase, which catalyzes the epimerization of the S- and R-forms, the enzyme allows the repair of both epimers of NAD(P)HX, a damaged form of NAD(P)H that is a result of enzymatic or heat-dependent hydration. This is ADP-dependent (S)-NAD(P)H-hydrate dehydratase from Enterococcus faecalis (strain ATCC 700802 / V583).